A 107-amino-acid chain; its full sequence is Pre-mRNA-splicing factor RDS3 (107 aa).

It belongs to the PHF5 family. In terms of assembly, component of the spliceosome where it interacts with CUS1, HSH49, HSH155, IST3 and RSE1. Also interacts with YRA1.

The protein localises to the nucleus. In terms of biological role, required for pre-mRNA splicing. Involved in regulation of drug sensitivity and may play a role in multidrug resistance. This chain is Pre-mRNA-splicing factor RDS3 (RDS3), found in Saccharomyces cerevisiae (strain ATCC 204508 / S288c) (Baker's yeast).